A 214-amino-acid polypeptide reads, in one-letter code: Pyridoxine/pyridoxamine 5'-phosphate oxidase (214 aa).

Residues 8–11 (RINY) and lysine 66 contribute to the substrate site. FMN contacts are provided by residues 61-66 (RIVLIK), 76-77 (FT), arginine 82, lysine 83, and glutamine 105. The substrate site is built by tyrosine 123, arginine 127, and serine 131. Residues 140–141 (QS) and tryptophan 184 contribute to the FMN site. A substrate-binding site is contributed by 190–192 (RLH). Arginine 194 lines the FMN pocket.

This sequence belongs to the pyridoxamine 5'-phosphate oxidase family. As to quaternary structure, homodimer. It depends on FMN as a cofactor.

It carries out the reaction pyridoxamine 5'-phosphate + O2 + H2O = pyridoxal 5'-phosphate + H2O2 + NH4(+). The enzyme catalyses pyridoxine 5'-phosphate + O2 = pyridoxal 5'-phosphate + H2O2. The protein operates within cofactor metabolism; pyridoxal 5'-phosphate salvage; pyridoxal 5'-phosphate from pyridoxamine 5'-phosphate: step 1/1. Its pathway is cofactor metabolism; pyridoxal 5'-phosphate salvage; pyridoxal 5'-phosphate from pyridoxine 5'-phosphate: step 1/1. Catalyzes the oxidation of either pyridoxine 5'-phosphate (PNP) or pyridoxamine 5'-phosphate (PMP) into pyridoxal 5'-phosphate (PLP). The protein is Pyridoxine/pyridoxamine 5'-phosphate oxidase of Burkholderia orbicola (strain MC0-3).